The following is a 216-amino-acid chain: Probable transaldolase (216 aa).

Lys83 functions as the Schiff-base intermediate with substrate in the catalytic mechanism.

This sequence belongs to the transaldolase family. Type 3B subfamily.

The protein resides in the cytoplasm. It catalyses the reaction D-sedoheptulose 7-phosphate + D-glyceraldehyde 3-phosphate = D-erythrose 4-phosphate + beta-D-fructose 6-phosphate. The protein operates within carbohydrate degradation; pentose phosphate pathway; D-glyceraldehyde 3-phosphate and beta-D-fructose 6-phosphate from D-ribose 5-phosphate and D-xylulose 5-phosphate (non-oxidative stage): step 2/3. Its function is as follows. Transaldolase is important for the balance of metabolites in the pentose-phosphate pathway. The polypeptide is Probable transaldolase (Sphingopyxis alaskensis (strain DSM 13593 / LMG 18877 / RB2256) (Sphingomonas alaskensis)).